The chain runs to 272 residues: HMP-PP phosphatase (272 aa).

Asp-8 functions as the Nucleophile in the catalytic mechanism. Positions 8, 10, and 212 each coordinate Mg(2+).

This sequence belongs to the HAD-like hydrolase superfamily. Cof family. The cofactor is Mg(2+).

It catalyses the reaction 4-amino-2-methyl-5-(diphosphooxymethyl)pyrimidine + H2O = 4-amino-2-methyl-5-(phosphooxymethyl)pyrimidine + phosphate + H(+). In terms of biological role, catalyzes the hydrolysis of 4-amino-2-methyl-5-hydroxymethylpyrimidine pyrophosphate (HMP-PP) to 4-amino-2-methyl-5-hydroxymethylpyrimidine phosphate (HMP-P). This chain is HMP-PP phosphatase, found in Escherichia coli (strain 55989 / EAEC).